A 682-amino-acid polypeptide reads, in one-letter code: DNA-directed RNA polymerase subunit beta' (682 aa).

4 residues coordinate Zn(2+): C69, C71, C87, and C90. Residues D489, D491, and D493 each coordinate Mg(2+).

It belongs to the RNA polymerase beta' chain family. RpoC1 subfamily. In terms of assembly, in plastids the minimal PEP RNA polymerase catalytic core is composed of four subunits: alpha, beta, beta', and beta''. When a (nuclear-encoded) sigma factor is associated with the core the holoenzyme is formed, which can initiate transcription. The cofactor is Mg(2+). Zn(2+) serves as cofactor.

It localises to the plastid. The protein resides in the chloroplast. It catalyses the reaction RNA(n) + a ribonucleoside 5'-triphosphate = RNA(n+1) + diphosphate. DNA-dependent RNA polymerase catalyzes the transcription of DNA into RNA using the four ribonucleoside triphosphates as substrates. This Agrostis stolonifera (Creeping bentgrass) protein is DNA-directed RNA polymerase subunit beta'.